Reading from the N-terminus, the 1101-residue chain is Rho GTPase-activating protein 30 (1101 aa).

In terms of domain architecture, Rho-GAP spans 20-215; sequence CDLREHLQHS…FILTHVDQLF (196 aa). Disordered stretches follow at residues 305–397 and 450–499; these read RKLP…VRAL and LQPR…LEDS. The span at 309–319 shows a compositional bias: basic and acidic residues; that stretch reads LRVEDREEKSS. A compositionally biased stretch (low complexity) spans 348 to 367; sequence SSSSQPSSLMPESLESNSME. Pro residues predominate over residues 451-465; that stretch reads QPRPSPALGPGPPGS. S578 carries the post-translational modification Phosphoserine. A disordered region spans residues 622–848; the sequence is LGPKPINWEG…EQKSIDVETE (227 aa). 4 stretches are compositionally biased toward basic and acidic residues: residues 659–677, 686–762, 786–821, and 829–844; these read TRQE…REEA, EAGK…KGDD, EVVH…HSED, and DDRK…KSID. Phosphoserine is present on S875. Disordered regions lie at residues 878–901 and 968–987; these read EINE…GMEA and CPRP…GSRA. Position 996 is a phosphoserine (S996). Residues 1044–1076 are disordered; sequence SRPLSCLERPPEGTEGSEPRSRLSLPPRELHPV. A compositionally biased stretch (basic and acidic residues) spans 1052 to 1064; sequence RPPEGTEGSEPRS.

In terms of assembly, interacts with RHOU in a GTP-independent manner.

Its subcellular location is the cytoplasmic vesicle. GTPase-activating protein (GAP) for RAC1 and RHOA, but not for CDC42. This is Rho GTPase-activating protein 30 (Arhgap30) from Mus musculus (Mouse).